Reading from the N-terminus, the 105-residue chain is Small ribosomal subunit protein eS10A (105 aa).

This sequence belongs to the eukaryotic ribosomal protein eS10 family. As to quaternary structure, component of the small ribosomal subunit (SSU). Mature yeast ribosomes consist of a small (40S) and a large (60S) subunit. The 40S small subunit contains 1 molecule of ribosomal RNA (18S rRNA) and 33 different proteins (encoded by 57 genes). The large 60S subunit contains 3 rRNA molecules (25S, 5.8S and 5S rRNA) and 46 different proteins (encoded by 81 genes). eS10 interacts with GCN1 (via middle region); this interaction is direct and promotes GCN2 kinase activity. The N-terminus is not modified.

Its subcellular location is the cytoplasm. In terms of biological role, component of the ribosome, a large ribonucleoprotein complex responsible for the synthesis of proteins in the cell. The small ribosomal subunit (SSU) binds messenger RNAs (mRNAs) and translates the encoded message by selecting cognate aminoacyl-transfer RNA (tRNA) molecules. The large subunit (LSU) contains the ribosomal catalytic site termed the peptidyl transferase center (PTC), which catalyzes the formation of peptide bonds, thereby polymerizing the amino acids delivered by tRNAs into a polypeptide chain. The nascent polypeptides leave the ribosome through a tunnel in the LSU and interact with protein factors that function in enzymatic processing, targeting, and the membrane insertion of nascent chains at the exit of the ribosomal tunnel. eS10 plays a role as a positive regulator of the GCN2 kinase activity by stimulating GCN1-mediated GCN2 activation. The polypeptide is Small ribosomal subunit protein eS10A (Saccharomyces cerevisiae (strain ATCC 204508 / S288c) (Baker's yeast)).